Consider the following 375-residue polypeptide: Alpha-1,2-galactosyltransferase (375 aa).

The Cytoplasmic segment spans residues 1-2 (MR). A helical; Signal-anchor for type II membrane protein transmembrane segment spans residues 3 to 23 (FAPYLISAVVITTIILGGAWW). Topologically, residues 24–375 (TSAMDTKLQT…HIQNLLKPSS (352 aa)) are lumenal.

This sequence belongs to the glycosyltransferase 34 family. Post-translationally, O-glycosylated.

The protein localises to the golgi apparatus membrane. Its function is as follows. Involved in the O- and N-linked oligosaccharide modification of proteins transported through the Golgi stack. This occurs in cis Golgi where the enzyme transfers galactose from UDP-galactose to a variety of mannose based acceptors. This Schizosaccharomyces pombe (strain 972 / ATCC 24843) (Fission yeast) protein is Alpha-1,2-galactosyltransferase (gma12).